Here is a 206-residue protein sequence, read N- to C-terminus: Small ribosomal subunit protein uS4 (206 aa).

One can recognise an S4 RNA-binding domain in the interval 96-156; the sequence is CRLDNVVYRM…EKSKNQLRIA (61 aa).

Belongs to the universal ribosomal protein uS4 family. Part of the 30S ribosomal subunit. Contacts protein S5. The interaction surface between S4 and S5 is involved in control of translational fidelity.

In terms of biological role, one of the primary rRNA binding proteins, it binds directly to 16S rRNA where it nucleates assembly of the body of the 30S subunit. Its function is as follows. With S5 and S12 plays an important role in translational accuracy. The polypeptide is Small ribosomal subunit protein uS4 (Ectopseudomonas mendocina (strain ymp) (Pseudomonas mendocina)).